We begin with the raw amino-acid sequence, 104 residues long: NADH-quinone oxidoreductase subunit K (104 aa).

The next 3 helical transmembrane spans lie at 4 to 24 (VPAS…LFGA), 31 to 51 (VIVL…FVAF), and 67 to 87 (LFTM…LIAL).

The protein belongs to the complex I subunit 4L family. As to quaternary structure, NDH-1 is composed of 14 different subunits. Subunits NuoA, H, J, K, L, M, N constitute the membrane sector of the complex.

The protein localises to the cell membrane. The catalysed reaction is a quinone + NADH + 5 H(+)(in) = a quinol + NAD(+) + 4 H(+)(out). NDH-1 shuttles electrons from NADH, via FMN and iron-sulfur (Fe-S) centers, to quinones in the respiratory chain. The immediate electron acceptor for the enzyme in this species is believed to be a menaquinone. Couples the redox reaction to proton translocation (for every two electrons transferred, four hydrogen ions are translocated across the cytoplasmic membrane), and thus conserves the redox energy in a proton gradient. This chain is NADH-quinone oxidoreductase subunit K, found in Bacillus anthracis (strain A0248).